Reading from the N-terminus, the 20-residue chain is Venom prothrombin activator notanarin-D (20 aa).

The 10-residue stretch at 1-10 (SNSLFEEVRP) folds into the Gla domain. A 4-carboxyglutamate mark is found at Glu6 and Glu7. A Peptidase S1 domain is found at 11-20 (IVNGMDCKLG).

It belongs to the peptidase S1 family. Snake venom subfamily. As to quaternary structure, heterodimer of a light chain and a heavy chain; disulfide-linked. In terms of processing, gamma-carboxyglutamate residues are formed by vitamin K dependent carboxylation. These residues are essential for the binding of calcium. Expressed by the venom gland.

It is found in the secreted. It catalyses the reaction Selective cleavage of Arg-|-Thr and then Arg-|-Ile bonds in prothrombin to form thrombin.. In terms of biological role, snake prothrombin activator that attacks the hemostatic system of prey. This protein is functionally similar to blood coagulation factor Xa. The polypeptide is Venom prothrombin activator notanarin-D (Notechis scutatus niger (Peninsula tiger snake)).